The primary structure comprises 67 residues: MARLKAPELRELDVEELERRLAETRRELFNLRFQHATGQLENTGQLREVRRNIARLLTVLNQKRQEK.

The protein belongs to the universal ribosomal protein uL29 family.

This is Large ribosomal subunit protein uL29 from Rubrobacter xylanophilus (strain DSM 9941 / JCM 11954 / NBRC 16129 / PRD-1).